Reading from the N-terminus, the 442-residue chain is Probable glycine dehydrogenase (decarboxylating) subunit 1 (442 aa).

The protein belongs to the GcvP family. N-terminal subunit subfamily. As to quaternary structure, the glycine cleavage system is composed of four proteins: P, T, L and H. In this organism, the P 'protein' is a heterodimer of two subunits.

The enzyme catalyses N(6)-[(R)-lipoyl]-L-lysyl-[glycine-cleavage complex H protein] + glycine + H(+) = N(6)-[(R)-S(8)-aminomethyldihydrolipoyl]-L-lysyl-[glycine-cleavage complex H protein] + CO2. Functionally, the glycine cleavage system catalyzes the degradation of glycine. The P protein binds the alpha-amino group of glycine through its pyridoxal phosphate cofactor; CO(2) is released and the remaining methylamine moiety is then transferred to the lipoamide cofactor of the H protein. The protein is Probable glycine dehydrogenase (decarboxylating) subunit 1 of Geotalea uraniireducens (strain Rf4) (Geobacter uraniireducens).